Reading from the N-terminus, the 183-residue chain is Hypoxanthine/guanine phosphoribosyltransferase (183 aa).

The protein belongs to the purine/pyrimidine phosphoribosyltransferase family. Archaeal HPRT subfamily. Homodimer.

It localises to the cytoplasm. It catalyses the reaction IMP + diphosphate = hypoxanthine + 5-phospho-alpha-D-ribose 1-diphosphate. The enzyme catalyses GMP + diphosphate = guanine + 5-phospho-alpha-D-ribose 1-diphosphate. It participates in purine metabolism; IMP biosynthesis via salvage pathway; IMP from hypoxanthine: step 1/1. Its function is as follows. Catalyzes a salvage reaction resulting in the formation of IMP that is energically less costly than de novo synthesis. In Methanocaldococcus infernus (strain DSM 11812 / JCM 15783 / ME), this protein is Hypoxanthine/guanine phosphoribosyltransferase.